Consider the following 541-residue polypeptide: Formimidoyltransferase-cyclodeaminase (541 aa).

The formiminotransferase N-subdomain stretch occupies residues 1–181 (MAKLVECVPN…GATVTGARTF (181 aa)). The active-site For formimidoyltransferase activity is the His82. Residue 163 to 172 (GPPAFVPQWG) coordinates folate. Residues 182 to 326 (LIAYNINLLC…PRERIIEYLV (145 aa)) are formiminotransferase C-subdomain. The segment at 327-334 (QAGQEDKG) is linker. A cyclodeaminase/cyclohydrolase region spans residues 335–541 (LVTKPLGAFV…VLALLEKREA (207 aa)). Catalysis depends on Asp412, which acts as the For cyclodeaminase activity.

This sequence in the C-terminal section; belongs to the cyclodeaminase/cyclohydrolase family. It in the N-terminal section; belongs to the formiminotransferase family. Homooctamer, including four polyglutamate binding sites. The subunits are arranged as a tetramer of dimers, and form a planar ring-shaped structure.

It localises to the cytoplasm. The protein localises to the cytosol. The protein resides in the golgi apparatus. It is found in the cytoskeleton. Its subcellular location is the microtubule organizing center. It localises to the centrosome. The protein localises to the centriole. The enzyme catalyses 5-formimidoyltetrahydrofolate + L-glutamate = N-formimidoyl-L-glutamate + (6S)-5,6,7,8-tetrahydrofolate. The catalysed reaction is 5-formimidoyltetrahydrofolate + 2 H(+) = (6R)-5,10-methenyltetrahydrofolate + NH4(+). The protein operates within amino-acid degradation; L-histidine degradation into L-glutamate; L-glutamate from N-formimidoyl-L-glutamate (transferase route): step 1/1. Its function is as follows. Folate-dependent enzyme, that displays both transferase and deaminase activity. Serves to channel one-carbon units from formiminoglutamate to the folate pool. In terms of biological role, binds and promotes bundling of vimentin filaments originating from the Golgi. This chain is Formimidoyltransferase-cyclodeaminase (FTCD), found in Gallus gallus (Chicken).